Consider the following 542-residue polypeptide: Sodium/hydrogen exchanger 8 (542 aa).

The next 11 helical transmembrane spans lie at 55–75 (EQSS…CIIL), 79–99 (LIRY…LGIL), 118–138 (EEMF…IFES), 151–171 (IGSI…VVGG), 186–206 (NMTD…VATI), 256–276 (TFLQ…ALGT), 306–326 (AYLP…VFAF), 349–369 (LVLF…NFFR), 374–394 (TPKM…PYAL), 412–432 (TTIV…MPLI), and 446–466 (NKKD…ESEH). Thr471 bears the Phosphothreonine mark. Phosphoserine is present on residues Ser532 and Ser534.

This sequence belongs to the monovalent cation:proton antiporter 1 (CPA1) transporter (TC 2.A.36) family.

The protein localises to the golgi apparatus membrane. Its subcellular location is the golgi apparatus. It localises to the trans-Golgi network membrane. It is found in the endosome. The protein resides in the multivesicular body membrane. The protein localises to the apical cell membrane. Its subcellular location is the cytoplasmic vesicle. It localises to the secretory vesicle. It is found in the acrosome. The catalysed reaction is Na(+)(in) + H(+)(out) = Na(+)(out) + H(+)(in). Functionally, na(+)/H(+) antiporter. Mediates the electoneutral exchange of intracellular H(+) ions for extracellular Na(+) in 1:1 stoichiometry. Acts as an Na(+)/H(+) exchanger in the trans-Golgi. Contributes to the regulation of pH regulation of Golgi apparatus, and consequently, in protein trafficking and endosomal morphology. In germ cells, plays a crucial role in acrosome biogenesis and sperm development, probably by playing a role in the fusion of the Golgi-derived vesicles that form the acrosomal cap. Can also be active at the cell surface of specialized cells. In the small intestine, at the cell membrane, plays a major physiological role in transepithelial absorption of Na(+) and regulates intracellular pH homeostasis of intestinal epithelial cells. Acts as an important regulator of mucosal integrity in the intestine and in the stomach, could mediate the pH fluctuation necessary for mucin exocytosis or assist membrane trafficking of other proteins. Plays a role in photoreceptor survival and in the maintenance of intracellular pH homeostasis in retinal pigment epithelium (RPE cells). This chain is Sodium/hydrogen exchanger 8 (SLC9A8), found in Macaca fascicularis (Crab-eating macaque).